Reading from the N-terminus, the 568-residue chain is AT-rich interactive domain-containing protein 3B (568 aa).

At Met-1 the chain carries N-acetylmethionine. Residues 1–22 (MEPLQQQQQQQQQKQPQQPLLQ) show a composition bias toward low complexity. Residues 1–174 (MEPLQQQQQQ…SVPTAGQPSW (174 aa)) are disordered. Ser-87 carries the phosphoserine modification. Over residues 88–107 (EPEEEEGGLEDEDGDDDVAE) the composition is skewed to acidic residues. Residues 151 to 160 (TKEDHTKDAS) show a composition bias toward basic and acidic residues. The interaction with RB1 stretch occupies residues 201–374 (SRDFAKLYEL…SSPKIRFSIL (174 aa)). Positions 213–305 (DPERKEFLDD…YLYAYECEKK (93 aa)) constitute an ARID domain. A Phosphoserine modification is found at Ser-309. The residue at position 370 (Arg-370) is an Asymmetric dimethylarginine. Residues 378-403 (SSSGTSASSPRIPPASTLRKGDGVPV) form a disordered region. The REKLES domain maps to 425 to 522 (GPLEHLRERL…GVLFAQKPVV (98 aa)). An interaction with ARID3A region spans residues 495-518 (SNIGSINMSVDIDGTTYTGVLFAQ). Low complexity predominate over residues 529-559 (TPQSIGSSASSSNSSSSHCSPSPTSSRGTPS). The tract at residues 529–568 (TPQSIGSSASSSNSSSSHCSPSPTSSRGTPSAEPSTSWSL) is disordered.

As to quaternary structure, heterodimer with ARID3A. Interacts with unphosphorylated RB1. Expressed at high levels in testis. Also expressed in prostate, thyroid and thymus.

The protein resides in the nucleus. Functionally, transcription factor involved in the production of cranial mesenchymal tissues. Favors nuclear targeting of ARID3A. The chain is AT-rich interactive domain-containing protein 3B (Arid3b) from Mus musculus (Mouse).